We begin with the raw amino-acid sequence, 354 residues long: Cysteine and histidine-rich domain-containing protein morgana (354 aa).

Cys-4, Cys-9, Cys-23, His-26, Cys-41, Cys-42, Cys-58, His-63, Cys-140, Cys-145, Cys-159, His-162, Cys-177, Cys-178, Cys-194, and His-199 together coordinate Zn(2+). 2 consecutive CHORD domains span residues 4 to 63 (CYNR…LAKH) and 140 to 199 (CKNN…YGEH). The region spanning 210 to 301 (VVQCRYDWHQ…LEPGSWSNLN (92 aa)) is the CS domain. 2 positions are modified to phosphoserine: Ser-324 and Ser-339.

As to quaternary structure, interacts with Hsp83.

It localises to the cytoplasm. The protein resides in the nucleus. It is found in the cytoskeleton. The protein localises to the spindle. Functionally, regulates centrosome duplication and mitotic spindle dynamics. Also involved in controlling the size of dendritic arbors. May act as co-chaperone for Hsp83. During mitotic spindle assembly, regulates microtubule (MT) dynamics by binding to MTs and promoting MT polymerisation. Promotes the elongation and retraction of terminal branches in response to changes in body size, possibly acting downstream of the TORC2 pathway to enable proportional scaling of dendritic arbors. This Drosophila melanogaster (Fruit fly) protein is Cysteine and histidine-rich domain-containing protein morgana.